Reading from the N-terminus, the 238-residue chain is Ribonuclease 3 (238 aa).

One can recognise an RNase III domain in the interval 11-136 (RARLEAAIGY…LIAAIYLDGG (126 aa)). Glutamate 49 is a Mg(2+) binding site. Residue aspartate 53 is part of the active site. Mg(2+) is bound by residues aspartate 122 and glutamate 125. Glutamate 125 is a catalytic residue. One can recognise a DRBM domain in the interval 161–230 (DAKTELQEWA…AMKLLEREGV (70 aa)). Over residues 180–193 (YRTEDRSGPDHDPR) the composition is skewed to basic and acidic residues. Positions 180–215 (YRTEDRSGPDHDPRFTVTVEVDGIDPETGVDRSKRG) are disordered.

Belongs to the ribonuclease III family. As to quaternary structure, homodimer. Mg(2+) is required as a cofactor.

Its subcellular location is the cytoplasm. It catalyses the reaction Endonucleolytic cleavage to 5'-phosphomonoester.. Functionally, digests double-stranded RNA. Involved in the processing of primary rRNA transcript to yield the immediate precursors to the large and small rRNAs (23S and 16S). Processes some mRNAs, and tRNAs when they are encoded in the rRNA operon. Processes pre-crRNA and tracrRNA of type II CRISPR loci if present in the organism. This chain is Ribonuclease 3, found in Sinorhizobium medicae (strain WSM419) (Ensifer medicae).